The primary structure comprises 836 residues: Probable ribonuclease ZC3H12B (836 aa).

The interval 1 to 92 (MTATAEVETP…SPCLDRPSFS (92 aa)) is disordered. Residues 8-28 (ETPKMEKSASKEEKQQPKQDS) are compositionally biased toward basic and acidic residues. A compositionally biased stretch (acidic residues) spans 35–46 (DSEEWMSSESDP). Residues 50 to 60 (SLKSSDNSKSC) are compositionally biased toward polar residues. The segment covering 70 to 80 (KEMHSKPHRQL) has biased composition (basic residues). One can recognise an RNase NYN domain in the interval 190–345 (LRPVVIDGSN…LGRHGPSLEN (156 aa)). Residues 355 to 380 (EHKKQPCPYGKKCTYGHKCKYYHPER) form a C3H1-type zinc finger.

It belongs to the ZC3H12 family. Mg(2+) serves as cofactor.

Its function is as follows. May function as RNase and regulate the levels of target RNA species. The chain is Probable ribonuclease ZC3H12B (ZC3H12B) from Homo sapiens (Human).